A 517-amino-acid chain; its full sequence is Xaa-Pro dipeptidase (517 aa).

5 residues coordinate Mn(2+): Asp244, Asp255, His336, Glu381, and Glu420.

This sequence belongs to the peptidase M24B family. Bacterial-type prolidase subfamily. Monomer. It depends on Mn(2+) as a cofactor.

It catalyses the reaction Xaa-L-Pro dipeptide + H2O = an L-alpha-amino acid + L-proline. The catalysed reaction is diisopropyl fluorophosphate + H2O = diisopropyl phosphate + fluoride + 2 H(+). The enzyme catalyses An aryl dialkyl phosphate + H2O = dialkyl phosphate + an aryl alcohol.. In terms of biological role, splits dipeptides with a prolyl or hydroxyprolyl residue in the C-terminal position and a nonpolar amino acid at the N-terminal position. Also catalyzes the hydrolysis of toxic organophosphorus cholinesterase-inhibiting compounds including insecticide paraoxon and nerve gases such as diisopropylfluorophosphate (DFP), O-isopropyl methylphosphonofluoridate (sarin), O-pinacolyl methylphosphonofluoridate (soman), and O-cyclohexyl methylphosphonofluoridate. The protein is Xaa-Pro dipeptidase (pepQ) of Alteromonas sp.